The following is a 342-amino-acid chain: tRNA N6-adenosine threonylcarbamoyltransferase (342 aa).

Fe cation-binding residues include histidine 111 and histidine 115. Substrate-binding positions include 133 to 137, aspartate 166, glycine 179, aspartate 183, and asparagine 272; that span reads AVSGG. Residue aspartate 300 participates in Fe cation binding.

This sequence belongs to the KAE1 / TsaD family. Fe(2+) serves as cofactor.

The protein resides in the cytoplasm. It catalyses the reaction L-threonylcarbamoyladenylate + adenosine(37) in tRNA = N(6)-L-threonylcarbamoyladenosine(37) in tRNA + AMP + H(+). Its function is as follows. Required for the formation of a threonylcarbamoyl group on adenosine at position 37 (t(6)A37) in tRNAs that read codons beginning with adenine. Is involved in the transfer of the threonylcarbamoyl moiety of threonylcarbamoyl-AMP (TC-AMP) to the N6 group of A37, together with TsaE and TsaB. TsaD likely plays a direct catalytic role in this reaction. This Geobacter sp. (strain M21) protein is tRNA N6-adenosine threonylcarbamoyltransferase.